A 673-amino-acid chain; its full sequence is UvrABC system protein B (673 aa).

The Helicase ATP-binding domain maps to 26 to 183 (EGLEDGLAHQ…RRLAELQYTR (158 aa)). 39–46 (GVTGSGKT) provides a ligand contact to ATP. Positions 92 to 115 (YYDYYQPEAYVPSSDTFIEKDASV) match the Beta-hairpin motif. One can recognise a Helicase C-terminal domain in the interval 431–597 (QVDDLLSEIR…GLNKKVVDIL (167 aa)). Residues 633-668 (QQKIHELEGQMMQHAQNLEFEEAAEIRDQLHQLREL) form the UVR domain.

It belongs to the UvrB family. In terms of assembly, forms a heterotetramer with UvrA during the search for lesions. Interacts with UvrC in an incision complex.

It is found in the cytoplasm. Its function is as follows. The UvrABC repair system catalyzes the recognition and processing of DNA lesions. A damage recognition complex composed of 2 UvrA and 2 UvrB subunits scans DNA for abnormalities. Upon binding of the UvrA(2)B(2) complex to a putative damaged site, the DNA wraps around one UvrB monomer. DNA wrap is dependent on ATP binding by UvrB and probably causes local melting of the DNA helix, facilitating insertion of UvrB beta-hairpin between the DNA strands. Then UvrB probes one DNA strand for the presence of a lesion. If a lesion is found the UvrA subunits dissociate and the UvrB-DNA preincision complex is formed. This complex is subsequently bound by UvrC and the second UvrB is released. If no lesion is found, the DNA wraps around the other UvrB subunit that will check the other stand for damage. The sequence is that of UvrABC system protein B from Citrobacter koseri (strain ATCC BAA-895 / CDC 4225-83 / SGSC4696).